The chain runs to 226 residues: Transcriptional regulatory protein CitT (226 aa).

In terms of domain architecture, Response regulatory spans 3 to 119 (HIAIAEDDFR…KFRQVLLQYK (117 aa)). Asp54 bears the 4-aspartylphosphate mark. Residues 178 to 197 (AEELGEKMGASRTTARRYAE) constitute a DNA-binding region (H-T-H motif).

Post-translationally, phosphorylated by CitS.

It is found in the cytoplasm. Member of the two-component regulatory system CitT/CitS. Regulates the expression of the citM-yflN operon. Phosphorylated CitT binds to the citM promoter to activate the transcription of the citM-yflN operon. The chain is Transcriptional regulatory protein CitT (citT) from Bacillus subtilis (strain 168).